A 139-amino-acid chain; its full sequence is Putative pre-16S rRNA nuclease (139 aa).

It belongs to the YqgF nuclease family.

The protein localises to the cytoplasm. Functionally, could be a nuclease involved in processing of the 5'-end of pre-16S rRNA. This chain is Putative pre-16S rRNA nuclease, found in Streptococcus uberis (strain ATCC BAA-854 / 0140J).